We begin with the raw amino-acid sequence, 185 residues long: Pyruvate/ketoisovalerate oxidoreductases common subunit gamma (185 aa).

As to quaternary structure, heterotetramer of one alpha, one beta, one delta and one gamma chain.

The catalysed reaction is 2 oxidized [2Fe-2S]-[ferredoxin] + pyruvate + CoA = 2 reduced [2Fe-2S]-[ferredoxin] + acetyl-CoA + CO2 + H(+). It carries out the reaction 3-methyl-2-oxobutanoate + 2 oxidized [2Fe-2S]-[ferredoxin] + CoA = 2-methylpropanoyl-CoA + 2 reduced [2Fe-2S]-[ferredoxin] + CO2 + H(+). This chain is Pyruvate/ketoisovalerate oxidoreductases common subunit gamma (porG), found in Thermococcus kodakarensis (strain ATCC BAA-918 / JCM 12380 / KOD1) (Pyrococcus kodakaraensis (strain KOD1)).